We begin with the raw amino-acid sequence, 448 residues long: StAR-related lipid transfer protein 3 (448 aa).

The 173-residue stretch at 47–219 (FSDVRRTFCL…YSPPESLAGS (173 aa)) folds into the MENTAL domain. A run of 4 helical transmembrane segments spans residues 53–73 (TFCLFVTFDLLFITLLWIIEL), 96–116 (FFDIFLLAVFRFLCLQLGYAA), 122–142 (WWVIAITTLVTTAFLIAKVIL), and 150–170 (AFGYVLPITSFVVAWLETWFL). Residues 208–214 (QFYSPPE) carry the FFAT motif. An START domain is found at 232 to 445 (AVTEQEKAFV…LRQRINEVHV (214 aa)).

This sequence belongs to the STARD3 family. Homodimer. Post-translationally, phosphorylated. Phosphorylation allows the tethering of two membranes that participates in the formation of ER-endosome contacts. Phosphorylation of FFAT motif drives membrane tethering between the endoplasmic reticulum and late endosomes that in turn allows the efficient transport of sterol mediated by the START domain.

It is found in the late endosome membrane. The catalysed reaction is cholesterol(in) = cholesterol(out). In terms of biological role, sterol-binding protein that mediates cholesterol transport from the endoplasmic reticulum to endosomes. The sterol transport mechanism is triggered by phosphorylation of FFAT motif that leads to membrane tethering between the endoplasmic reticulum and late endosomes. Acts as a lipid transfer protein that redirects sterol to the endosome at the expense of the cell membrane and favors membrane formation inside endosomes. This Danio rerio (Zebrafish) protein is StAR-related lipid transfer protein 3.